The primary structure comprises 371 residues: Ferrochelatase (371 aa).

Residues His-218 and Glu-299 each contribute to the Fe cation site.

Belongs to the ferrochelatase family.

The protein localises to the cytoplasm. It catalyses the reaction heme b + 2 H(+) = protoporphyrin IX + Fe(2+). It participates in porphyrin-containing compound metabolism; protoheme biosynthesis; protoheme from protoporphyrin-IX: step 1/1. Catalyzes the ferrous insertion into protoporphyrin IX. The sequence is that of Ferrochelatase from Ralstonia nicotianae (strain ATCC BAA-1114 / GMI1000) (Ralstonia solanacearum).